The primary structure comprises 191 residues: tRNA-specific adenosine deaminase 2 (191 aa).

The region spanning 20–145 (EETEKWMEEA…SVLNIASADL (126 aa)) is the CMP/dCMP-type deaminase domain. Position 71 (His71) interacts with Zn(2+). Residue Glu73 is the Proton donor of the active site. 2 residues coordinate Zn(2+): Cys107 and Cys110.

This sequence belongs to the cytidine and deoxycytidylate deaminase family. ADAT2 subfamily. The cofactor is Zn(2+).

The catalysed reaction is adenosine(34) in tRNA + H2O + H(+) = inosine(34) in tRNA + NH4(+). Functionally, probably participates in deamination of adenosine-34 to inosine in many tRNAs. The protein is tRNA-specific adenosine deaminase 2 (ADAT2) of Homo sapiens (Human).